Reading from the N-terminus, the 320-residue chain is Ferrochelatase (320 aa).

Fe cation-binding residues include H194 and E275.

Belongs to the ferrochelatase family. Monomer.

It is found in the cytoplasm. It carries out the reaction heme b + 2 H(+) = protoporphyrin IX + Fe(2+). It functions in the pathway porphyrin-containing compound metabolism; protoheme biosynthesis; protoheme from protoporphyrin-IX: step 1/1. In terms of biological role, catalyzes the ferrous insertion into protoporphyrin IX. The sequence is that of Ferrochelatase from Escherichia coli O9:H4 (strain HS).